The primary structure comprises 95 residues: Nucleoid-associated protein MMOB0740 (95 aa).

It belongs to the YbaB/EbfC family. In terms of assembly, homodimer.

It is found in the cytoplasm. Its subcellular location is the nucleoid. Functionally, binds to DNA and alters its conformation. May be involved in regulation of gene expression, nucleoid organization and DNA protection. The sequence is that of Nucleoid-associated protein MMOB0740 from Mycoplasma mobile (strain ATCC 43663 / 163K / NCTC 11711) (Mesomycoplasma mobile).